Consider the following 129-residue polypeptide: uncharacterized protein (129 aa).

This is an uncharacterized protein from Acheta domesticus (House cricket).